Here is a 215-residue protein sequence, read N- to C-terminus: Nucleoside triphosphate pyrophosphatase (215 aa).

Asp77 functions as the Proton acceptor in the catalytic mechanism.

The protein belongs to the Maf family. The cofactor is a divalent metal cation.

Its subcellular location is the cytoplasm. It catalyses the reaction a ribonucleoside 5'-triphosphate + H2O = a ribonucleoside 5'-phosphate + diphosphate + H(+). It carries out the reaction a 2'-deoxyribonucleoside 5'-triphosphate + H2O = a 2'-deoxyribonucleoside 5'-phosphate + diphosphate + H(+). In terms of biological role, nucleoside triphosphate pyrophosphatase. May have a dual role in cell division arrest and in preventing the incorporation of modified nucleotides into cellular nucleic acids. The polypeptide is Nucleoside triphosphate pyrophosphatase (Rickettsia peacockii (strain Rustic)).